The primary structure comprises 62 residues: Large ribosomal subunit protein bL28 (62 aa).

The protein belongs to the bacterial ribosomal protein bL28 family.

This chain is Large ribosomal subunit protein bL28, found in Frankia casuarinae (strain DSM 45818 / CECT 9043 / HFP020203 / CcI3).